The chain runs to 164 residues: 2-C-methyl-D-erythritol 2,4-cyclodiphosphate synthase (164 aa).

The a divalent metal cation site is built by D9 and H11. Residues 9–11 and 36–37 contribute to the 4-CDP-2-C-methyl-D-erythritol 2-phosphate site; these read DAH and HS. An a divalent metal cation-binding site is contributed by H44. 4-CDP-2-C-methyl-D-erythritol 2-phosphate is bound by residues 58–60, 63–67, 134–137, F141, and R144; these read DLG, FPDSD, and TTTE.

It belongs to the IspF family. In terms of assembly, homotrimer. It depends on a divalent metal cation as a cofactor.

The catalysed reaction is 4-CDP-2-C-methyl-D-erythritol 2-phosphate = 2-C-methyl-D-erythritol 2,4-cyclic diphosphate + CMP. It participates in isoprenoid biosynthesis; isopentenyl diphosphate biosynthesis via DXP pathway; isopentenyl diphosphate from 1-deoxy-D-xylulose 5-phosphate: step 4/6. In terms of biological role, involved in the biosynthesis of isopentenyl diphosphate (IPP) and dimethylallyl diphosphate (DMAPP), two major building blocks of isoprenoid compounds. Catalyzes the conversion of 4-diphosphocytidyl-2-C-methyl-D-erythritol 2-phosphate (CDP-ME2P) to 2-C-methyl-D-erythritol 2,4-cyclodiphosphate (ME-CPP) with a corresponding release of cytidine 5-monophosphate (CMP). This chain is 2-C-methyl-D-erythritol 2,4-cyclodiphosphate synthase, found in Alkalilimnicola ehrlichii (strain ATCC BAA-1101 / DSM 17681 / MLHE-1).